The primary structure comprises 314 residues: Cyclin-dependent kinase 2 (314 aa).

A Protein kinase domain is found at 8–287 (FQRAEKIGEG…AKDALQHAYF (280 aa)). Residues 14–22 (IGEGTYGIV) and Lys-37 each bind ATP. Thr-18 is modified (phosphothreonine). Residue Tyr-19 is modified to Phosphotyrosine. Asp-130 (proton acceptor) is an active-site residue. Tyr-162 is modified (phosphotyrosine). Thr-163 is modified (phosphothreonine).

This sequence belongs to the protein kinase superfamily. CMGC Ser/Thr protein kinase family. CDC2/CDKX subfamily. As to quaternary structure, interacts with cyclin CycG.

It catalyses the reaction L-seryl-[protein] + ATP = O-phospho-L-seryl-[protein] + ADP + H(+). The catalysed reaction is L-threonyl-[protein] + ATP = O-phospho-L-threonyl-[protein] + ADP + H(+). It carries out the reaction [DNA-directed RNA polymerase] + ATP = phospho-[DNA-directed RNA polymerase] + ADP + H(+). Like Cdk1, could play a key role in the control of the eukaryotic cell cycle. The sequence is that of Cyclin-dependent kinase 2 from Drosophila melanogaster (Fruit fly).